A 733-amino-acid polypeptide reads, in one-letter code: Polyribonucleotide nucleotidyltransferase (733 aa).

Residues Asp-488 and Asp-494 each contribute to the Mg(2+) site. The KH domain occupies 555–614 (PRIEMMTIPVEKIREVIGSGGKVIREIVEQTGAKINIEDDGTIKIASPDTKSIETAKSWI). One can recognise an S1 motif domain in the interval 624–692 (GTIYQGTVVK…ERGKIRLSMK (69 aa)). The interval 698-733 (TGKEIPQDDLIKTEKEQNPDEKNKSEKKRHNRKKED) is disordered. The segment covering 702–721 (IPQDDLIKTEKEQNPDEKNK) has biased composition (basic and acidic residues). Residues 722 to 733 (SEKKRHNRKKED) show a composition bias toward basic residues.

This sequence belongs to the polyribonucleotide nucleotidyltransferase family. Mg(2+) is required as a cofactor.

It is found in the cytoplasm. It carries out the reaction RNA(n+1) + phosphate = RNA(n) + a ribonucleoside 5'-diphosphate. Involved in mRNA degradation. Catalyzes the phosphorolysis of single-stranded polyribonucleotides processively in the 3'- to 5'-direction. This chain is Polyribonucleotide nucleotidyltransferase, found in Bartonella bacilliformis (strain ATCC 35685 / KC583 / Herrer 020/F12,63).